A 353-amino-acid polypeptide reads, in one-letter code: Protein MGF 360-9L (353 aa).

It belongs to the asfivirus MGF 360 family. In terms of assembly, interacts with host STAT1; this interaction mediates STAT1 degradation through apoptosis. Interacts with host STAT2; this interaction mediates STAT2 degradation through the proteasome.

The protein resides in the host cytoplasm. In terms of biological role, plays a role in virus cell tropism, and may be required for efficient virus replication in macrophages. In addition, inhibits IFN-beta-induced IFN-stimulated genes (ISGs) transcription. Mechanistically, degrades host STAT1 and STAT2 through apoptosis and ubiquitin-proteasome pathways respectively. This is Protein MGF 360-9L from African swine fever virus (isolate Tick/Malawi/Lil 20-1/1983) (ASFV).